The sequence spans 339 residues: Nicotinate-nucleotide--dimethylbenzimidazole phosphoribosyltransferase (339 aa).

The active-site Proton acceptor is Glu306.

Belongs to the CobT family.

The catalysed reaction is 5,6-dimethylbenzimidazole + nicotinate beta-D-ribonucleotide = alpha-ribazole 5'-phosphate + nicotinate + H(+). The protein operates within nucleoside biosynthesis; alpha-ribazole biosynthesis; alpha-ribazole from 5,6-dimethylbenzimidazole: step 1/2. Functionally, catalyzes the synthesis of alpha-ribazole-5'-phosphate from nicotinate mononucleotide (NAMN) and 5,6-dimethylbenzimidazole (DMB). In Brucella canis (strain ATCC 23365 / NCTC 10854 / RM-666), this protein is Nicotinate-nucleotide--dimethylbenzimidazole phosphoribosyltransferase.